The primary structure comprises 134 residues: MARKTAAEAKETRQRIIDAALEVFVAQGVPDATLDQIARKAGVTRGAVYWHFNGKLEVLQAVLASRQHPLELDFTPDLGIERSWEAVVVAMLDAVHSPQSKQFSEILIYQGLDESGLIHNRMVQASDRFLQYIR.

Positions 10 to 70 (KETRQRIIDA…AVLASRQHPL (61 aa)) constitute an HTH tetR-type domain. A DNA-binding region (H-T-H motif) is located at residues 33–52 (TLDQIARKAGVTRGAVYWHF).

In terms of biological role, unknown, does not seem to be involved in regulation of the ttgGHI or ttgVW operons. This is an uncharacterized protein from Pseudomonas putida (strain DOT-T1E).